We begin with the raw amino-acid sequence, 415 residues long: uncharacterized protein (415 aa).

3 disordered regions span residues 39 to 77 (FLPPSSNTTLQKESQEGSPPPTQSQEPLKPMENVSRPIH), 220 to 247 (AEDKETTSKGSNAKEESKNGLHPKHPLT), and 346 to 415 (VTLN…NGSK). 3 stretches are compositionally biased toward basic and acidic residues: residues 220–238 (AEDKETTSKGSNAKEESKN), 365–380 (DVNKDPKLNLCPDKHM), and 400–415 (SKTEKIYPEPRRNGSK).

This is an uncharacterized protein from Rattus norvegicus (Rat).